We begin with the raw amino-acid sequence, 873 residues long: DNA mismatch repair protein MutS (873 aa).

Residue 625–632 (GPNMGGKS) coordinates ATP.

It belongs to the DNA mismatch repair MutS family.

In terms of biological role, this protein is involved in the repair of mismatches in DNA. It is possible that it carries out the mismatch recognition step. This protein has a weak ATPase activity. This is DNA mismatch repair protein MutS from Xanthomonas campestris pv. campestris (strain 8004).